A 153-amino-acid polypeptide reads, in one-letter code: Large ribosomal subunit protein uL15 (153 aa).

The segment at 21-41 (RGIGSGKGKTGGRGIKGQKSR) is disordered. Over residues 23–35 (IGSGKGKTGGRGI) the composition is skewed to gly residues.

Belongs to the universal ribosomal protein uL15 family. Part of the 50S ribosomal subunit.

Its function is as follows. Binds to the 23S rRNA. The polypeptide is Large ribosomal subunit protein uL15 (Rickettsia felis (strain ATCC VR-1525 / URRWXCal2) (Rickettsia azadi)).